The primary structure comprises 143 residues: SsrA-binding protein (143 aa).

The protein belongs to the SmpB family.

The protein localises to the cytoplasm. In terms of biological role, required for rescue of stalled ribosomes mediated by trans-translation. Binds to transfer-messenger RNA (tmRNA), required for stable association of tmRNA with ribosomes. tmRNA and SmpB together mimic tRNA shape, replacing the anticodon stem-loop with SmpB. tmRNA is encoded by the ssrA gene; the 2 termini fold to resemble tRNA(Ala) and it encodes a 'tag peptide', a short internal open reading frame. During trans-translation Ala-aminoacylated tmRNA acts like a tRNA, entering the A-site of stalled ribosomes, displacing the stalled mRNA. The ribosome then switches to translate the ORF on the tmRNA; the nascent peptide is terminated with the 'tag peptide' encoded by the tmRNA and targeted for degradation. The ribosome is freed to recommence translation, which seems to be the essential function of trans-translation. The polypeptide is SsrA-binding protein (Deinococcus geothermalis (strain DSM 11300 / CIP 105573 / AG-3a)).